An 890-amino-acid polypeptide reads, in one-letter code: Probable LRR receptor-like serine/threonine-protein kinase At1g51860 (890 aa).

Residues 1–23 form the signal peptide; it reads MKSLHWFLHLLIIAFTVLRSVEA. Over 24-513 the chain is Extracellular; sequence QNQAGFISLD…KESKKVPMVA (490 aa). N49, N96, N142, N181, N256, N285, N289, N295, N312, N332, N340, N402, and N419 each carry an N-linked (GlcNAc...) asparagine glycan. LRR repeat units lie at residues 412–435, 436–458, and 460–481; these read RIIS…SKLT, LLTV…FAEM, and SLKL…PDSL. N-linked (GlcNAc...) asparagine glycosylation is found at N465, N473, and N497. A helical membrane pass occupies residues 514 to 534; sequence IAASVAGVFALLVILAIFFVI. Topologically, residues 535–890 are cytoplasmic; the sequence is KRKNVKAHKS…STSDFAPGAR (356 aa). T575 is modified (phosphothreonine). The Protein kinase domain maps to 584 to 856; the sequence is NNFERVLGKG…HVVMELNDCV (273 aa). ATP-binding positions include 590 to 598 and K611; that span reads LGKGGFGTV. Y656 carries the phosphotyrosine modification. Catalysis depends on D708, which acts as the Proton acceptor. The residue at position 742 (S742) is a Phosphoserine. Residues T743 and T748 each carry the phosphothreonine modification. A Phosphotyrosine modification is found at Y756.

Belongs to the protein kinase superfamily. Ser/Thr protein kinase family.

It is found in the membrane. The catalysed reaction is L-seryl-[protein] + ATP = O-phospho-L-seryl-[protein] + ADP + H(+). The enzyme catalyses L-threonyl-[protein] + ATP = O-phospho-L-threonyl-[protein] + ADP + H(+). In Arabidopsis thaliana (Mouse-ear cress), this protein is Probable LRR receptor-like serine/threonine-protein kinase At1g51860.